The chain runs to 30 residues: Non-toxic phospholipase A2 (30 aa).

Tyr-26, Gly-28, and Gly-30 together coordinate Ca(2+).

This sequence belongs to the phospholipase A2 family. Group I subfamily. Homodimer. Ca(2+) serves as cofactor. Post-translationally, glycosylated. Expressed by the venom gland.

It is found in the secreted. The enzyme catalyses a 1,2-diacyl-sn-glycero-3-phosphocholine + H2O = a 1-acyl-sn-glycero-3-phosphocholine + a fatty acid + H(+). Enzymatic activity is diminished by Cd(2+) and Hg(2+). Functionally, relatively highly potent phospholipase A2 that displays potent antimicrobial and hemolytic activities. It does not show cytotoxic effects on the three human cell lines tested. PLA2 catalyzes the calcium-dependent hydrolysis of the 2-acyl groups in 3-sn-phosphoglycerides. It shows similar potencies on both Gram-negative and Gram-positive bacteria: B.cereus (MIC&gt;9 ug/ml), B.subtilis (MIC&gt;12 ug/ml), E.faecalis (MIC&gt;7 ug/ml), S.epidermidis (MIC&gt;12 ug/ml), S.aureux (MIC&gt;5 ug/ml), E.coli (MIC&gt;7 ug/ml), K.pneumonia (MIC&gt;8 ug/ml), P.aeruginosa (MIC&gt;10 ug/ml), and S.enteric (MIC&gt;9 ug/ml). It also shows antifungal activities: A.niger (MIC&gt;15 ug/ml), B.cinerea (MIC&gt;12 ug/ml), F.solani (MIC&gt;15 ug/ml), and P.digitatum (MIC&gt;10 ug/ml). In Walterinnesia aegyptia (Desert black snake), this protein is Non-toxic phospholipase A2.